The chain runs to 554 residues: Probable phospholipase D F09G2.8 (554 aa).

Over 1–123 (MPLRLINFRQ…GNSRNRIIKP (123 aa)) the chain is Cytoplasmic. A helical; Signal-anchor for type II membrane protein transmembrane segment spans residues 124–144 (ACVPISIVSLFIIALVFLPLF). Over 145 to 554 (NEEDLASPIK…DWNSEYSKDL (410 aa)) the chain is Extracellular. N-linked (GlcNAc...) asparagine glycosylation is found at Asn181, Asn208, Asn244, and Asn266. A PLD phosphodiesterase 1 domain is found at 272–299 (GSGIIHTKFILSDIATLYIGSANMDWKS). Residues His277, Lys279, and Asp284 contribute to the active site. N-linked (GlcNAc...) asparagine glycosylation is found at Asn333, Asn350, Asn468, and Asn513. Residues 492-518 (FTRVNHAKYMVTEDIAYIGTSNWSGDY) enclose the PLD phosphodiesterase 2 domain.

This sequence belongs to the phospholipase D family.

It localises to the membrane. The enzyme catalyses a 1,2-diacyl-sn-glycero-3-phosphocholine + H2O = a 1,2-diacyl-sn-glycero-3-phosphate + choline + H(+). In Caenorhabditis elegans, this protein is Probable phospholipase D F09G2.8.